Here is a 172-residue protein sequence, read N- to C-terminus: 3-hydroxydecanoyl-[acyl-carrier-protein] dehydratase (172 aa).

The active site involves histidine 71.

The protein belongs to the thioester dehydratase family. FabA subfamily. As to quaternary structure, homodimer.

The protein resides in the cytoplasm. It carries out the reaction a (3R)-hydroxyacyl-[ACP] = a (2E)-enoyl-[ACP] + H2O. The catalysed reaction is (3R)-hydroxydecanoyl-[ACP] = (2E)-decenoyl-[ACP] + H2O. It catalyses the reaction (2E)-decenoyl-[ACP] = (3Z)-decenoyl-[ACP]. It participates in lipid metabolism; fatty acid biosynthesis. Its function is as follows. Necessary for the introduction of cis unsaturation into fatty acids. Catalyzes the dehydration of (3R)-3-hydroxydecanoyl-ACP to E-(2)-decenoyl-ACP and then its isomerization to Z-(3)-decenoyl-ACP. Can catalyze the dehydratase reaction for beta-hydroxyacyl-ACPs with saturated chain lengths up to 16:0, being most active on intermediate chain length. This Klebsiella pneumoniae subsp. pneumoniae (strain ATCC 700721 / MGH 78578) protein is 3-hydroxydecanoyl-[acyl-carrier-protein] dehydratase.